The sequence spans 581 residues: Putative carboxypeptidase YOL153C (581 aa).

Topologically, residues 1–29 (MTETHHAPLPDVYPSSKQPTSSTYSKCKK) are cytoplasmic. Residue K17 forms a Glycyl lysine isopeptide (Lys-Gly) (interchain with G-Cter in ubiquitin) linkage. A helical; Signal-anchor for type II membrane protein membrane pass occupies residues 30–46 (FGLPLIGLLTLLLAYIS). Topologically, residues 47–581 (SFTKPVPNST…IVNVNEYGHD (535 aa)) are extracellular. N-linked (GlcNAc...) asparagine glycosylation is found at N54 and N76. Residue H170 participates in Zn(2+) binding. D172 is a catalytic residue. D207 contributes to the Zn(2+) binding site. E241 functions as the Proton acceptor in the catalytic mechanism. Positions 242 and 270 each coordinate Zn(2+). N335 and N428 each carry an N-linked (GlcNAc...) asparagine glycan. H550 serves as a coordination point for Zn(2+).

This sequence belongs to the peptidase M20A family. Zn(2+) is required as a cofactor.

It localises to the membrane. This chain is Putative carboxypeptidase YOL153C, found in Saccharomyces cerevisiae (strain ATCC 204508 / S288c) (Baker's yeast).